The following is a 78-amino-acid chain: Putative antitoxin PF1222 (78 aa).

Belongs to the UPF0330 family.

Its function is as follows. Possibly the antitoxin component of a type II toxin-antitoxin (TA) system. The sequence is that of Putative antitoxin PF1222 from Pyrococcus furiosus (strain ATCC 43587 / DSM 3638 / JCM 8422 / Vc1).